A 387-amino-acid chain; its full sequence is Na(+)/H(+) antiporter NhaA (387 aa).

A run of 12 helical transmembrane segments spans residues 16–36, 53–73, 89–109, 118–138, 147–167, 171–191, 197–217, 220–240, 251–271, 283–303, 321–341, and 354–374; these read AGGVVLIIATIVSLLVANSSI, IEHYVNDGLMTIFFLLIGLEL, LLPIIAALGGMIVPACIHMFF, GSGIPMATDIAFAVGILSLLG, VFLTALAVIDDLGAIFTIAIF, GIDVMYLAGAAGIWAVLFILN, ILWPYLLGGIVMWYFMLHSGV, TITGVILAFVIPFGKGDPDSI, PVAFIILPIFALANTCIIIDS, IGIFLGLVVGKPLGITLFCAI, VIGVACLGGIGFTMSIFITLL, and IAIMLSSVTAALIGLLWLKMT.

The protein belongs to the NhaA Na(+)/H(+) (TC 2.A.33) antiporter family.

The protein resides in the cell inner membrane. The catalysed reaction is Na(+)(in) + 2 H(+)(out) = Na(+)(out) + 2 H(+)(in). Its function is as follows. Na(+)/H(+) antiporter that extrudes sodium in exchange for external protons. The sequence is that of Na(+)/H(+) antiporter NhaA from Cytophaga hutchinsonii (strain ATCC 33406 / DSM 1761 / CIP 103989 / NBRC 15051 / NCIMB 9469 / D465).